The chain runs to 414 residues: Enterobactin exporter EntS (414 aa).

Over 1-21 the chain is Cytoplasmic; it reads MNRQSWLLNLSLLKTHPAFRA. A helical transmembrane segment spans residues 22–42; it reads VFLARFISIVSLGLLGVAVPV. Over 43 to 55 the chain is Periplasmic; it reads QIQMMTHSTWQVG. The helical transmembrane segment at 56–76 threads the bilayer; it reads LSVTLTGGAMFIGLMVGGVLA. Residues 77 to 83 are Cytoplasmic-facing; it reads DRYERKK. The chain crosses the membrane as a helical span at residues 84–104; sequence VILLARGTCGIGFIGLCVNAL. Residues 105 to 109 are Periplasmic-facing; the sequence is LPEPS. Residues 110-130 traverse the membrane as a helical segment; sequence LLAIYLLGLWDGFFASLGVTA. At 131 to 156 the chain is on the cytoplasmic side; that stretch reads LLAATPALVGRENLMQAGAITMLTVR. The helical transmembrane segment at 157–177 threads the bilayer; that stretch reads LGSVISPMLGGILLASGGVAW. Asparagine 178 is a topological domain (periplasmic). The helical transmembrane segment at 179 to 199 threads the bilayer; it reads YGLAAAGTFITLLPLLTLPRL. The Cytoplasmic segment spans residues 200-218; sequence PVPPQPRENPFIALLAAFR. Residues 219–239 form a helical membrane-spanning segment; that stretch reads FLLASPLIGGIALLGGLVTMA. The Periplasmic segment spans residues 240-256; it reads SAVRVLYPALAMSWQMS. A helical membrane pass occupies residues 257–277; sequence AAQIGLLYAAIPLGAAIGALT. The Cytoplasmic portion of the chain corresponds to 278–287; that stretch reads SGQLAHSVRP. Residues 288-307 traverse the membrane as a helical segment; it reads GLIMLVSTVGSFLAVGLFAI. At 308 to 313 the chain is on the periplasmic side; sequence MPVWIA. A helical transmembrane segment spans residues 314–336; the sequence is GVICLALFGWLSAISSLLQYTLL. The Cytoplasmic segment spans residues 337 to 356; that stretch reads QTQTPENMLGRMNGLWTAQN. Residues 357–377 traverse the membrane as a helical segment; that stretch reads VTGDAIGAALLGGLGAMMTPV. Residue alanine 378 is a topological domain, periplasmic. Residues 379–399 form a helical membrane-spanning segment; sequence SASVSGFGLVIIGLLLLLVLG. Residues 400 to 414 lie on the Cytoplasmic side of the membrane; the sequence is ELRRFRQTPPVSDAG.

Belongs to the major facilitator superfamily. EntS (TC 2.A.1.38) family.

It is found in the cell inner membrane. In terms of biological role, component of an export pathway for enterobactin. The chain is Enterobactin exporter EntS from Salmonella typhimurium (strain LT2 / SGSC1412 / ATCC 700720).